A 355-amino-acid chain; its full sequence is Guanine nucleotide-binding protein G(i) subunit alpha-2 (355 aa).

Glycine 2 is lipidated: N-myristoyl glycine. Cysteine 3 carries the S-palmitoyl cysteine lipid modification. In terms of domain architecture, G-alpha spans 32–355; the sequence is REVKLLLLGA…KNNLKDCGLF (324 aa). A G1 motif region spans residues 35–48; the sequence is KLLLLGAGESGKST. GTP-binding positions include 40 to 47, 176 to 182, 201 to 205, 270 to 273, and alanine 327; these read GAGESGKS, LRTRVKT, DVGGQ, and NKKD. Serine 47 contacts Mg(2+). A G2 motif region spans residues 174–182; sequence DVLRTRVKT. At arginine 179 the chain carries ADP-ribosylarginine; by cholera toxin. Position 182 (threonine 182) interacts with Mg(2+). The tract at residues 197-206 is G3 motif; the sequence is FKMFDVGGQR. Position 205 is a deamidated glutamine; by Photorhabdus PAU_02230 (glutamine 205). Positions 266–273 are G4 motif; it reads ILFLNKKD. Positions 325-330 are G5 motif; the sequence is TCATDT. Cysteine 352 is modified (ADP-ribosylcysteine; by pertussis toxin).

This sequence belongs to the G-alpha family. G(i/o/t/z) subfamily. G proteins are composed of 3 units; alpha, beta and gamma. The alpha chain contains the guanine nucleotide binding site. In this context, interacts with GNB2. Interacts with GPSM1. Interacts with RGS12 and RGS14. Interacts with UNC5B. Interacts (inactive GDP-bound form) with NUCB1 (via GBA motif); the interaction leads to activation of GNAI3. Interacts (inactive GDP-bound form) with CCDC88C/DAPLE (via GBA motif). Interacts (inactive GDP-bound form) with CCDC8A/GIV (via GBA motif). Interacts with CXCR1 and CXCR2. (Microbial infection) Deamidated at Gln-205 by Photorhabdus asymbiotica toxin PAU_02230, blocking GTP hydrolysis of heterotrimeric GNAQ or GNA11 and G-alphai (GNAI1, GNAI2 or GNAI3) proteins, thereby activating RhoA.

Its subcellular location is the cytoplasm. It is found in the cytoskeleton. The protein localises to the microtubule organizing center. The protein resides in the centrosome. It localises to the cell membrane. Its subcellular location is the membrane. Functionally, guanine nucleotide-binding proteins (G proteins) are involved as modulators or transducers in various transmembrane signaling systems. The G(i) proteins are involved in hormonal regulation of adenylate cyclase: they inhibit the cyclase in response to beta-adrenergic stimuli. May play a role in cell division. In terms of biological role, regulates the cell surface density of dopamine receptors DRD2 by sequestrating them as an intracellular pool. The protein is Guanine nucleotide-binding protein G(i) subunit alpha-2 (GNAI2) of Homo sapiens (Human).